Here is a 314-residue protein sequence, read N- to C-terminus: Oxidoreductase poxI (314 aa).

The protein belongs to the NmrA-type oxidoreductase family. Isoflavone reductase subfamily.

It participates in secondary metabolite biosynthesis. In terms of biological role, oxidoreductase; part of the gene cluster that mediates the biosynthesis of oxaleimides, cytotoxic compounds containing an unusual disubstituted succinimide moiety. The first step of the pathway is provided by the HR-PKS poxF that serves in a new mode of collaborative biosynthesis with the PKS-NRPS poxE, by providing the olefin containing amino acid substrate via the synthesis of an ACP-bound dec-4-enoate. The cytochrome P450 monooxygenase poxM-catalyzed oxidation at the alpha-position creates the enzyme-bound 2-hydroxydec-4-enoyl-ACP thioester, which may be prone to spontaneous hydrolysis to yield 2-hydroxydec-4-enoic acid due to increased electrophilicity of the carbonyl. 2-hydroxydec-4-enoic acid can then be further oxidized by poxM to yield the alpha-ketoacid 2-oxodec-4-enoicacid, which is reductively aminated by the aminotransferase poxL to yield (S,E)-2-aminodec-4-enoic acid. The Hybrid PKS-NRPS synthetase poxE then performs condensation between the octaketide product of its PKS modules and the amino group of (S,E)-2-aminodec-4-enoic acid which is activated and incorporated by the adenylation domain. The resulting aminoacyl product can be cyclized by the Diels-Alderase PoxQ and reductively released by the reductive (R) domain of poxE to yield an aldehyde intermediate. The released aldehyde is then substrate for a Knoevenagel condensation by the hydrolyase poxO followed by an oxidation at the 5-position of the pyrrolidone ring. The presence of the olefin from the amino acid building block allows for migration of the substituted allyl group to occur. This allylic transposition reaction takes place in a conjugate addition, semipinacol-like fashion to yield a succinimide intermediate. Iterative two-electron oxidations of the C7 methyl of the succinimide intermediate to the carboxylic acid can be catalyzed by one of two remaining cytochrome P450 monooxygenasess poxC or poxD to yield oxaleimide A. Subsequent oxidation yields the maleimide scaffold oxaleimide I. Both oxaleimide A and oxaleimide I can undergo oxidative modifications in the decalin ring to yield the series of products oxaleimides B to H. The polypeptide is Oxidoreductase poxI (Penicillium oxalicum (strain 114-2 / CGMCC 5302) (Penicillium decumbens)).